We begin with the raw amino-acid sequence, 229 residues long: 2-C-methyl-D-erythritol 4-phosphate cytidylyltransferase (229 aa).

It belongs to the IspD/TarI cytidylyltransferase family. IspD subfamily.

It catalyses the reaction 2-C-methyl-D-erythritol 4-phosphate + CTP + H(+) = 4-CDP-2-C-methyl-D-erythritol + diphosphate. It functions in the pathway isoprenoid biosynthesis; isopentenyl diphosphate biosynthesis via DXP pathway; isopentenyl diphosphate from 1-deoxy-D-xylulose 5-phosphate: step 2/6. Catalyzes the formation of 4-diphosphocytidyl-2-C-methyl-D-erythritol from CTP and 2-C-methyl-D-erythritol 4-phosphate (MEP). The protein is 2-C-methyl-D-erythritol 4-phosphate cytidylyltransferase of Neisseria gonorrhoeae (strain ATCC 700825 / FA 1090).